A 178-amino-acid polypeptide reads, in one-letter code: Fatty-acid and retinol-binding protein 1 (178 aa).

The signal sequence occupies residues 1–16 (MYHQLILLALIGTIMA). Coiled-coil stretches lie at residues 67-89 (DAAL…ELRN) and 129-154 (IKQA…LKVT).

This sequence belongs to the fatty-acid and retinol-binding protein (FARBP) family. Not glycosylated.

It is found in the secreted. In terms of biological role, binds retinol and different fatty acids. The chain is Fatty-acid and retinol-binding protein 1 from Loa loa (Eye worm).